The primary structure comprises 434 residues: Histidinol dehydrogenase (434 aa).

Zn(2+) is bound by residues glutamate 260 and histidine 263. Residues glutamate 330 and histidine 331 each act as proton acceptor in the active site. Zn(2+) is bound at residue histidine 423.

The protein belongs to the histidinol dehydrogenase family. Requires Zn(2+) as cofactor.

It carries out the reaction L-histidinol + 2 NAD(+) + H2O = L-histidine + 2 NADH + 3 H(+). Its pathway is amino-acid biosynthesis; L-histidine biosynthesis; L-histidine from 5-phospho-alpha-D-ribose 1-diphosphate: step 9/9. Catalyzes the sequential NAD-dependent oxidations of L-histidinol to L-histidinaldehyde and then to L-histidine. This chain is Histidinol dehydrogenase (hisD), found in Synechocystis sp. (strain ATCC 27184 / PCC 6803 / Kazusa).